A 1161-amino-acid polypeptide reads, in one-letter code: Perforin-like protein 1 (1161 aa).

Residues 67–86 (LWITFVCLLTLHMFGLSSAV) traverse the membrane as a helical segment. Residues 154-329 (PEALNEVPTK…LGDSSALDLF (176 aa)) form a disordered region. Basic and acidic residues-rich tracts occupy residues 162–177 (TKVERNEFTEKGDKTE) and 184–194 (ADHKSLLEGRS). Acidic residues predominate over residues 201–211 (PDDDFDFLFED). Polar residues predominate over residues 222-234 (NKGTSSDETSPGD). A compositionally biased stretch (low complexity) spans 238-249 (GEGSSASDSLLS). N-linked (GlcNAc...) asparagine glycosylation occurs at N257. The span at 264–283 (NQKRITHPKSKAQHQKKVTK) shows a compositional bias: basic residues. Residues 309–322 (NTQADDSQRQSLGD) show a composition bias toward polar residues. N344 carries an N-linked (GlcNAc...) asparagine glycan. Positions 353–381 (AANDGGLFSSSGMGPTGASDETSANPLGS) are disordered. Over residues 361–378 (SSSGMGPTGASDETSANP) the composition is skewed to polar residues. The 355-residue stretch at 463–817 (LSAVYTKATK…LTPQDLSALT (355 aa)) folds into the MACPF domain. Cysteines 539 and 602 form a disulfide. The N-linked (GlcNAc...) asparagine glycan is linked to N550. Residues 554-589 (YQNELSVDASLQGGDPIGLNSFSASTGYRDFAKEVS) form a beta stranded membrane-spanning segment. The N-linked (GlcNAc...) asparagine glycan is linked to N618. C643 and C657 are disulfide-bonded. A beta stranded membrane pass occupies residues 694-740 (RSEVEKMRNMGIDVKTQLKMQLGGVSGGAGQGTSSKKNQSSSEYQMN). The interval 716-736 (GGVSGGAGQGTSSKKNQSSSE) is disordered. N-linked (GlcNAc...) asparagine glycosylation is present at N755. Intrachain disulfides connect C845-C900, C874-C881, C928-C981, C957-C964, C1019-C1080, and C1047-C1054. 3 N-linked (GlcNAc...) asparagine glycosylation sites follow: N1022, N1050, and N1111. The disordered stretch occupies residues 1094–1149 (VGKAKGNGKKKKGKKGKNKTNAPNEVEEGQQLGADSPSQVSVPADADSGPTSKTMS). Positions 1099–1111 (GNGKKKKGKKGKN) are enriched in basic residues.

This sequence belongs to the MPEG1 family. Homooligomer; forms a homooligomeric pore.

The protein localises to the parasitophorous vacuole membrane. The protein resides in the cytoplasmic vesicle. Its subcellular location is the secretory vesicle. It is found in the microneme membrane. Its function is as follows. Pore-forming protein that promotes parasite exit from host cells: mediates formation of a pore in the parasitophorous vacuolar membrane, leading to membrane permeabilization, thereby facilitating parasite egress from host cells. May also form a pore in the host plasma membrane. Preferentially binds inner leaflet lipids, such as phosphatidylethanolamine (PE) or phosphatidylserine (PS). This chain is Perforin-like protein 1, found in Toxoplasma gondii (strain ATCC 50861 / VEG).